The chain runs to 265 residues: Undecaprenyl-diphosphatase (265 aa).

8 consecutive transmembrane segments (helical) span residues 1–21 (MDWF…FLPI), 39–59 (QGLA…MMYY), 83–103 (LKLG…GFLG), 114–134 (ALVI…SDAF), 144–164 (LGVA…IPGT), 188–208 (SFLL…KDLI), 218–238 (MMAL…VFFI), and 244–264 (VGML…LFWL).

Belongs to the UppP family.

The protein resides in the cell inner membrane. The catalysed reaction is di-trans,octa-cis-undecaprenyl diphosphate + H2O = di-trans,octa-cis-undecaprenyl phosphate + phosphate + H(+). Functionally, catalyzes the dephosphorylation of undecaprenyl diphosphate (UPP). Confers resistance to bacitracin. This Alcanivorax borkumensis (strain ATCC 700651 / DSM 11573 / NCIMB 13689 / SK2) protein is Undecaprenyl-diphosphatase.